Here is a 247-residue protein sequence, read N- to C-terminus: Triosephosphate isomerase (247 aa).

Positions 10 and 12 each coordinate substrate. His94 functions as the Electrophile in the catalytic mechanism. Glu164 (proton acceptor) is an active-site residue.

This sequence belongs to the triosephosphate isomerase family. In terms of assembly, homodimer.

The catalysed reaction is D-glyceraldehyde 3-phosphate = dihydroxyacetone phosphate. Its pathway is carbohydrate biosynthesis; gluconeogenesis. It functions in the pathway carbohydrate degradation; glycolysis; D-glyceraldehyde 3-phosphate from glycerone phosphate: step 1/1. This chain is Triosephosphate isomerase (Tpi), found in Culex tarsalis (Encephalitis mosquito).